The sequence spans 317 residues: Lipoyl synthase (317 aa).

Residues 1–22 form a disordered region; sequence MVTVVNTLNRPRHPEKQNRPET. The span at 12 to 22 shows a compositional bias: basic and acidic residues; it reads RHPEKQNRPET. 7 residues coordinate [4Fe-4S] cluster: C57, C62, C68, C83, C87, C90, and S296. The 217-residue stretch at 69 to 285 folds into the Radical SAM core domain; sequence WEKKHATFMI…ETVAYAKGFL (217 aa).

The protein belongs to the radical SAM superfamily. Lipoyl synthase family. [4Fe-4S] cluster is required as a cofactor.

It localises to the cytoplasm. The catalysed reaction is [[Fe-S] cluster scaffold protein carrying a second [4Fe-4S](2+) cluster] + N(6)-octanoyl-L-lysyl-[protein] + 2 oxidized [2Fe-2S]-[ferredoxin] + 2 S-adenosyl-L-methionine + 4 H(+) = [[Fe-S] cluster scaffold protein] + N(6)-[(R)-dihydrolipoyl]-L-lysyl-[protein] + 4 Fe(3+) + 2 hydrogen sulfide + 2 5'-deoxyadenosine + 2 L-methionine + 2 reduced [2Fe-2S]-[ferredoxin]. The protein operates within protein modification; protein lipoylation via endogenous pathway; protein N(6)-(lipoyl)lysine from octanoyl-[acyl-carrier-protein]: step 2/2. Its function is as follows. Catalyzes the radical-mediated insertion of two sulfur atoms into the C-6 and C-8 positions of the octanoyl moiety bound to the lipoyl domains of lipoate-dependent enzymes, thereby converting the octanoylated domains into lipoylated derivatives. This is Lipoyl synthase from Azorhizobium caulinodans (strain ATCC 43989 / DSM 5975 / JCM 20966 / LMG 6465 / NBRC 14845 / NCIMB 13405 / ORS 571).